We begin with the raw amino-acid sequence, 373 residues long: Phospho-N-acetylmuramoyl-pentapeptide-transferase (373 aa).

Helical transmembrane passes span 28–48 (LLTV…TIAY), 72–92 (TPTM…LCWA), 94–114 (LANP…AVGW), 135–155 (YFWL…IASQ), 177–197 (IVPL…YFVI), 212–232 (GLAI…SYVS), 252–272 (VTIV…YNAH), 276–296 (VFMG…IAVM), 301–321 (IAFA…ILQV), and 350–370 (QVVV…LMTL).

The protein belongs to the glycosyltransferase 4 family. MraY subfamily. Requires Mg(2+) as cofactor.

The protein localises to the cell inner membrane. The catalysed reaction is UDP-N-acetyl-alpha-D-muramoyl-L-alanyl-gamma-D-glutamyl-meso-2,6-diaminopimeloyl-D-alanyl-D-alanine + di-trans,octa-cis-undecaprenyl phosphate = di-trans,octa-cis-undecaprenyl diphospho-N-acetyl-alpha-D-muramoyl-L-alanyl-D-glutamyl-meso-2,6-diaminopimeloyl-D-alanyl-D-alanine + UMP. Its pathway is cell wall biogenesis; peptidoglycan biosynthesis. Catalyzes the initial step of the lipid cycle reactions in the biosynthesis of the cell wall peptidoglycan: transfers peptidoglycan precursor phospho-MurNAc-pentapeptide from UDP-MurNAc-pentapeptide onto the lipid carrier undecaprenyl phosphate, yielding undecaprenyl-pyrophosphoryl-MurNAc-pentapeptide, known as lipid I. The sequence is that of Phospho-N-acetylmuramoyl-pentapeptide-transferase from Psychrobacter sp. (strain PRwf-1).